Reading from the N-terminus, the 156-residue chain is Persephin (156 aa).

The signal sequence occupies residues 1 to 21 (MAVGKFLLGSLLLLSLQLGQG). Cystine bridges form between cysteine 66–cysteine 124, cysteine 93–cysteine 152, and cysteine 97–cysteine 154.

Belongs to the TGF-beta family. GDNF subfamily. Homodimer; disulfide-linked. Interacts with GFRA4 coreceptor and RET: forms a 2:2:2 ternary complex composed of PSPN ligand, GFRA4 and RET receptor.

The protein resides in the secreted. Functionally, growth factor that exhibits neurotrophic activity on mesencephalic dopaminergic and motor neurons. Acts by binding to its coreceptor, GFRA4, leading to autophosphorylation and activation of the RET receptor. The chain is Persephin from Homo sapiens (Human).